The primary structure comprises 510 residues: 2,3-bisphosphoglycerate-independent phosphoglycerate mutase (510 aa).

Mn(2+)-binding residues include aspartate 11 and serine 61. Serine 61 functions as the Phosphoserine intermediate in the catalytic mechanism. Residues histidine 124, 154–155 (RD), arginine 185, arginine 191, 260–263 (RPDR), and lysine 333 each bind substrate. Mn(2+) is bound by residues aspartate 398, histidine 402, aspartate 439, histidine 440, and histidine 457.

Belongs to the BPG-independent phosphoglycerate mutase family. Monomer. Requires Mn(2+) as cofactor.

The enzyme catalyses (2R)-2-phosphoglycerate = (2R)-3-phosphoglycerate. It participates in carbohydrate degradation; glycolysis; pyruvate from D-glyceraldehyde 3-phosphate: step 3/5. In terms of biological role, catalyzes the interconversion of 2-phosphoglycerate and 3-phosphoglycerate. In Mycoplasma mobile (strain ATCC 43663 / 163K / NCTC 11711) (Mesomycoplasma mobile), this protein is 2,3-bisphosphoglycerate-independent phosphoglycerate mutase.